Consider the following 237-residue polypeptide: NAD-dependent protein deacetylase (237 aa).

A Deacetylase sirtuin-type domain is found at 1–237; it reads MLTTWLTEAK…LEETNRALQA (237 aa). Positions 18, 22, 29, 30, 95, 98, and 113 each coordinate NAD(+). Phenylalanine 29 is a binding site for nicotinamide. Position 98 (aspartate 98) interacts with nicotinamide. Histidine 113 functions as the Proton acceptor in the catalytic mechanism. 4 residues coordinate Zn(2+): cysteine 121, cysteine 124, cysteine 140, and cysteine 142. NAD(+) is bound by residues serine 180, serine 181, asparagine 205, and isoleucine 224.

It belongs to the sirtuin family. Class U subfamily. It depends on Zn(2+) as a cofactor.

Its subcellular location is the cytoplasm. The catalysed reaction is N(6)-acetyl-L-lysyl-[protein] + NAD(+) + H2O = 2''-O-acetyl-ADP-D-ribose + nicotinamide + L-lysyl-[protein]. In terms of biological role, NAD-dependent protein deacetylase which modulates the activities of several enzymes which are inactive in their acetylated form. This chain is NAD-dependent protein deacetylase, found in Halalkalibacterium halodurans (strain ATCC BAA-125 / DSM 18197 / FERM 7344 / JCM 9153 / C-125) (Bacillus halodurans).